Consider the following 255-residue polypeptide: Myb-related protein Zm38 (255 aa).

HTH myb-type domains are found at residues 9 to 61 and 62 to 116; these read KAHT…INYL and RPDL…RRKL. 2 consecutive DNA-binding regions (H-T-H motif) follow at residues 37 to 61 and 89 to 112; these read WRSL…INYL and WSLI…NTHV.

The protein localises to the nucleus. Transcription factor that negatively regulates genes involved in anthocyanin biosynthesis. The polypeptide is Myb-related protein Zm38 (Zea mays (Maize)).